The primary structure comprises 173 residues: Macro domain-containing protein in gbd 3'region (173 aa).

The region spanning 1–173 (MSGEHLQVVH…NYRLYRERLS (173 aa)) is the Macro domain.

The protein belongs to the MacroD-type family.

This chain is Macro domain-containing protein in gbd 3'region, found in Cupriavidus necator (Alcaligenes eutrophus).